Here is a 303-residue protein sequence, read N- to C-terminus: Coenzyme PQQ synthesis protein B (303 aa).

It belongs to the PqqB family.

It functions in the pathway cofactor biosynthesis; pyrroloquinoline quinone biosynthesis. In terms of biological role, may be involved in the transport of PQQ or its precursor to the periplasm. The chain is Coenzyme PQQ synthesis protein B from Acinetobacter baumannii (strain ACICU).